A 212-amino-acid chain; its full sequence is Imidazole glycerol phosphate synthase subunit HisH (212 aa).

The Glutamine amidotransferase type-1 domain maps to 4 to 210 (NIGIIDYGMG…LKWLHEKNSD (207 aa)). Residue cysteine 82 is the Nucleophile of the active site. Residues histidine 185 and glutamate 187 contribute to the active site.

As to quaternary structure, heterodimer of HisH and HisF.

The protein localises to the cytoplasm. It catalyses the reaction 5-[(5-phospho-1-deoxy-D-ribulos-1-ylimino)methylamino]-1-(5-phospho-beta-D-ribosyl)imidazole-4-carboxamide + L-glutamine = D-erythro-1-(imidazol-4-yl)glycerol 3-phosphate + 5-amino-1-(5-phospho-beta-D-ribosyl)imidazole-4-carboxamide + L-glutamate + H(+). The enzyme catalyses L-glutamine + H2O = L-glutamate + NH4(+). It participates in amino-acid biosynthesis; L-histidine biosynthesis; L-histidine from 5-phospho-alpha-D-ribose 1-diphosphate: step 5/9. In terms of biological role, IGPS catalyzes the conversion of PRFAR and glutamine to IGP, AICAR and glutamate. The HisH subunit catalyzes the hydrolysis of glutamine to glutamate and ammonia as part of the synthesis of IGP and AICAR. The resulting ammonia molecule is channeled to the active site of HisF. In Prochlorococcus marinus (strain MIT 9211), this protein is Imidazole glycerol phosphate synthase subunit HisH.